Here is a 40-residue protein sequence, read N- to C-terminus: Photosystem II reaction center protein J (40 aa).

Residues 8-28 (IPLWIIGTVAGIVVIGLIGLF) form a helical membrane-spanning segment.

Belongs to the PsbJ family. PSII is composed of 1 copy each of membrane proteins PsbA, PsbB, PsbC, PsbD, PsbE, PsbF, PsbH, PsbI, PsbJ, PsbK, PsbL, PsbM, PsbT, PsbX, PsbY, PsbZ, Psb30/Ycf12, at least 3 peripheral proteins of the oxygen-evolving complex and a large number of cofactors. It forms dimeric complexes.

Its subcellular location is the plastid. The protein resides in the chloroplast thylakoid membrane. Its function is as follows. One of the components of the core complex of photosystem II (PSII). PSII is a light-driven water:plastoquinone oxidoreductase that uses light energy to abstract electrons from H(2)O, generating O(2) and a proton gradient subsequently used for ATP formation. It consists of a core antenna complex that captures photons, and an electron transfer chain that converts photonic excitation into a charge separation. This Pisum sativum (Garden pea) protein is Photosystem II reaction center protein J.